The primary structure comprises 111 residues: Natriuretic peptide TNP-b (111 aa).

Residues 1–27 (MVGLSRLAGGGLLLLLLLALLPLALDG) form the signal peptide. Positions 28-71 (KPAPLPQALPEALAGGTTALRRDVTEEQQQQLVAEESSGPAAGR) are excised as a propeptide. Disordered regions lie at residues 51 to 77 (VTEEQQQQLVAEESSGPAAGRSDPKIG) and 92 to 111 (SGLGCNRPVQNRPKQIPGGS). Residues C80 and C96 are joined by a disulfide bond. Residues 107–111 (IPGGS) constitute a propeptide that is removed on maturation.

It belongs to the natriuretic peptide family. In terms of tissue distribution, expressed by the venom gland.

Its subcellular location is the secreted. Snake venom natriuretic peptide that exhibits vasoactive and probable hypotensive activity. Is only weakly active on natriuretic peptide receptor-C (NPR3). The chain is Natriuretic peptide TNP-b from Oxyuranus scutellatus scutellatus (Australian taipan).